A 314-amino-acid polypeptide reads, in one-letter code: Bis(5'-nucleosyl)-tetraphosphatase, symmetrical (314 aa).

The disordered stretch occupies residues 267 to 314; the sequence is QVPGNPITHPPKTAQRPRQPRRRQRQRGGDQAQTGPAPTPASTGPAGG. Residues 297–314 show a composition bias toward low complexity; sequence QAQTGPAPTPASTGPAGG.

This sequence belongs to the Ap4A hydrolase family.

The catalysed reaction is P(1),P(4)-bis(5'-adenosyl) tetraphosphate + H2O = 2 ADP + 2 H(+). Functionally, hydrolyzes diadenosine 5',5'''-P1,P4-tetraphosphate to yield ADP. The protein is Bis(5'-nucleosyl)-tetraphosphatase, symmetrical of Xanthomonas axonopodis pv. citri (strain 306).